We begin with the raw amino-acid sequence, 120 residues long: UPF0102 protein Pfl01_4685 (120 aa).

It belongs to the UPF0102 family.

The protein is UPF0102 protein Pfl01_4685 of Pseudomonas fluorescens (strain Pf0-1).